Reading from the N-terminus, the 64-residue chain is Large ribosomal subunit protein bL32 (64 aa).

Positions 1–10 (MAVPKRKTTP) are enriched in basic residues. A disordered region spans residues 1–22 (MAVPKRKTTPSKRDMRRANHDK). The segment covering 11–22 (SKRDMRRANHDK) has biased composition (basic and acidic residues).

This sequence belongs to the bacterial ribosomal protein bL32 family.

This Sorangium cellulosum (strain So ce56) (Polyangium cellulosum (strain So ce56)) protein is Large ribosomal subunit protein bL32.